Here is a 243-residue protein sequence, read N- to C-terminus: Isoprenyl transferase 2 (243 aa).

Asp23 is a catalytic residue. Position 23 (Asp23) interacts with Mg(2+). Substrate-binding positions include 24-27 (GNGR), Trp28, Arg36, His40, and 68-70 (STE). The active-site Proton acceptor is Asn71. Residues Trp72, Arg74, Arg191, and 197 to 199 (RTS) each bind substrate. Residue Glu210 participates in Mg(2+) binding.

It belongs to the UPP synthase family. In terms of assembly, homodimer. The cofactor is Mg(2+).

Functionally, catalyzes the condensation of isopentenyl diphosphate (IPP) with allylic pyrophosphates generating different type of terpenoids. The chain is Isoprenyl transferase 2 from Corynebacterium efficiens (strain DSM 44549 / YS-314 / AJ 12310 / JCM 11189 / NBRC 100395).